A 385-amino-acid chain; its full sequence is Tumor protein p53-inducible protein 13 (385 aa).

The first 27 residues, 1 to 27, serve as a signal peptide directing secretion; it reads MVHPPPPPPRLLLVALVGLLSLREVVA. The Extracellular segment spans residues 28 to 301; sequence EPAEEAGTPC…ARGPTPRTEE (274 aa). The segment at 242-297 is disordered; the sequence is APVSLTTGGPGGNGRSRTEAQMPSGQGNHGGCACPGQVSPAPRAAGPPRVARGPTP. The span at 281–297 shows a compositional bias: low complexity; the sequence is PAPRAAGPPRVARGPTP. Residues 302 to 322 form a helical membrane-spanning segment; it reads AAWAAMALTFLLVLLTLATLC. The Cytoplasmic segment spans residues 323 to 385; that stretch reads TRLHRNFRRS…DSGPDSESSD (63 aa). The segment covering 359 to 369 has biased composition (basic residues); that stretch reads SRRIKRSRRRP. The tract at residues 359 to 385 is disordered; sequence SRRIKRSRRRPLLPPTPDSGPDSESSD.

Its subcellular location is the cell membrane. It is found in the cytoplasm. Functionally, may act as a tumor suppressor. Inhibits tumor cell growth, when overexpressed. The polypeptide is Tumor protein p53-inducible protein 13 (Tp53i13) (Mus musculus (Mouse)).